We begin with the raw amino-acid sequence, 273 residues long: 2-dehydro-3-deoxyphosphooctonate aldolase (273 aa).

The protein belongs to the KdsA family.

The protein resides in the cytoplasm. It carries out the reaction D-arabinose 5-phosphate + phosphoenolpyruvate + H2O = 3-deoxy-alpha-D-manno-2-octulosonate-8-phosphate + phosphate. It participates in carbohydrate biosynthesis; 3-deoxy-D-manno-octulosonate biosynthesis; 3-deoxy-D-manno-octulosonate from D-ribulose 5-phosphate: step 2/3. Its pathway is bacterial outer membrane biogenesis; lipopolysaccharide biosynthesis. This Citrifermentans bemidjiense (strain ATCC BAA-1014 / DSM 16622 / JCM 12645 / Bem) (Geobacter bemidjiensis) protein is 2-dehydro-3-deoxyphosphooctonate aldolase.